A 213-amino-acid chain; its full sequence is N-(5'-phosphoribosyl)anthranilate isomerase (213 aa).

The protein belongs to the TrpF family.

It carries out the reaction N-(5-phospho-beta-D-ribosyl)anthranilate = 1-(2-carboxyphenylamino)-1-deoxy-D-ribulose 5-phosphate. Its pathway is amino-acid biosynthesis; L-tryptophan biosynthesis; L-tryptophan from chorismate: step 3/5. The sequence is that of N-(5'-phosphoribosyl)anthranilate isomerase from Rhodopseudomonas palustris (strain TIE-1).